The sequence spans 889 residues: Terminal uridylyltransferase 3 (889 aa).

The C2H2-type; atypical zinc-finger motif lies at 123 to 151; sequence VRCDLCAKMIESRDEEQIQEHFQVHHAAL. 4 residues coordinate Zn(2+): C125, C128, H143, and H148. UTP is bound by residues S225 and 236–239; that span reads SDAD. The Mg(2+) site is built by D237 and D239. Residue R286 coordinates RNA. Residues 394-398, K419, K423, and 437-438 each bind UTP; these read GVRNS and SY. Residues 505–572 form the PAP-associated domain; the sequence is LGGLIPLFFL…LCIDDPYEDN (68 aa). The short motif at 565-574 is the Nucleotide recognition motif (NRM) element; the sequence is IDDPYEDNFN. Disordered regions lie at residues 675 to 702 and 829 to 849; these read NNKS…HVES and RKKS…NHAG. Residues 829 to 846 are compositionally biased toward basic residues; it reads RKKSKGSKKRKNAVRRGN.

This sequence belongs to the DNA polymerase type-B-like family. Requires Mg(2+) as cofactor. Mn(2+) serves as cofactor.

It localises to the cytoplasm. The enzyme catalyses RNA(n) + UTP = RNA(n)-3'-uridine ribonucleotide + diphosphate. Its function is as follows. Terminal uridylyltransferase which catalyzes the addition of Us to the 3'-hydroxyl group of single-stranded RNAs. Does not mediate RNA-independent UTP polymerization. In Trypanosoma brucei brucei, this protein is Terminal uridylyltransferase 3.